A 243-amino-acid chain; its full sequence is Venom nerve growth factor 2 (243 aa).

The N-terminal stretch at 1–18 (MSMLCYTLIIAFLIGIWA) is a signal peptide. Residues 19-125 (APKSEDNVPL…TLNRNIRAKR (107 aa)) constitute a propeptide that is removed on maturation. A compositionally biased stretch (basic and acidic residues) spans 47–66 (GLKTSRNTDQRHPAPKKAED). Positions 47–67 (GLKTSRNTDQRHPAPKKAEDQ) are disordered. Disulfide bonds link C139–C204 and C192–C234. N-linked (GlcNAc...) asparagine glycosylation is present at N148.

It belongs to the NGF-beta family. In terms of assembly, homodimer; non-covalently linked. Expressed by the venom gland.

The protein localises to the secreted. Functionally, nerve growth factor is important for the development and maintenance of the sympathetic and sensory nervous systems. It stimulates division and differentiation of sympathetic and embryonic sensory neurons as well as basal forebrain cholinergic neurons in the brain. Its relevance in the snake venom is not clear. However, it has been shown to inhibit metalloproteinase-dependent proteolysis of platelet glycoprotein Ib alpha, suggesting a metalloproteinase inhibition to prevent metalloprotease autodigestion and/or protection against prey proteases. Binds a lipid between the two protein chains in the homodimer. The lipid-bound form promotes histamine relase from mouse mast cells, contrary to the lipid-free form. In Pseudonaja textilis (Eastern brown snake), this protein is Venom nerve growth factor 2.